Reading from the N-terminus, the 209-residue chain is N-(5'-phosphoribosyl)anthranilate isomerase (209 aa).

This sequence belongs to the TrpF family.

It catalyses the reaction N-(5-phospho-beta-D-ribosyl)anthranilate = 1-(2-carboxyphenylamino)-1-deoxy-D-ribulose 5-phosphate. The protein operates within amino-acid biosynthesis; L-tryptophan biosynthesis; L-tryptophan from chorismate: step 3/5. This Pelobacter propionicus (strain DSM 2379 / NBRC 103807 / OttBd1) protein is N-(5'-phosphoribosyl)anthranilate isomerase.